The following is a 253-amino-acid chain: Ribonuclease HII (253 aa).

An RNase H type-2 domain is found at 32-223; sequence APVAGLDEAG…FKTSGEEDRI (192 aa). Residues Asp38, Glu39, and Asp130 each coordinate a divalent metal cation.

This sequence belongs to the RNase HII family. Mn(2+) serves as cofactor. Requires Mg(2+) as cofactor.

The protein localises to the cytoplasm. It catalyses the reaction Endonucleolytic cleavage to 5'-phosphomonoester.. Endonuclease that specifically degrades the RNA of RNA-DNA hybrids. This is Ribonuclease HII from Chelativorans sp. (strain BNC1).